The primary structure comprises 137 residues: Basic phospholipase A2 PeBP(R)-I/II (137 aa).

A signal peptide spans 1-16; sequence MRTLWIMAVLLLGVEG. 7 disulfides stabilise this stretch: C42–C131, C44–C60, C59–C111, C65–C137, C66–C104, C73–C97, and C91–C102. H63 is an active-site residue. Residue D105 is part of the active site.

The protein belongs to the phospholipase A2 family. Group II subfamily. R49 sub-subfamily. Expressed by the venom gland.

It is found in the secreted. It carries out the reaction a 1,2-diacyl-sn-glycero-3-phosphocholine + H2O = a 1-acyl-sn-glycero-3-phosphocholine + a fatty acid + H(+). Functionally, snake venom phospholipases A2 that have myotoxic, and edema-inducing activity, as well as extremely weak lipolytic activity. PLA2 catalyzes the calcium-dependent hydrolysis of the 2-acyl groups in 3-sn-phosphoglycerides. The sequence is that of Basic phospholipase A2 PeBP(R)-I/II from Protobothrops elegans (Elegant pitviper).